The sequence spans 137 residues: Phosphoribosyl-AMP cyclohydrolase (137 aa).

A Mg(2+)-binding site is contributed by Asp84. Cys85 lines the Zn(2+) pocket. Residues Asp86 and Asp88 each coordinate Mg(2+). Residues Cys101 and Cys108 each coordinate Zn(2+).

The protein belongs to the PRA-CH family. Homodimer. It depends on Mg(2+) as a cofactor. The cofactor is Zn(2+).

It is found in the cytoplasm. The enzyme catalyses 1-(5-phospho-beta-D-ribosyl)-5'-AMP + H2O = 1-(5-phospho-beta-D-ribosyl)-5-[(5-phospho-beta-D-ribosylamino)methylideneamino]imidazole-4-carboxamide. It participates in amino-acid biosynthesis; L-histidine biosynthesis; L-histidine from 5-phospho-alpha-D-ribose 1-diphosphate: step 3/9. Functionally, catalyzes the hydrolysis of the adenine ring of phosphoribosyl-AMP. The chain is Phosphoribosyl-AMP cyclohydrolase from Chlorobium phaeobacteroides (strain DSM 266 / SMG 266 / 2430).